The following is a 462-amino-acid chain: Argininosuccinate lyase 2 (462 aa).

The protein belongs to the lyase 1 family. Argininosuccinate lyase subfamily.

Its subcellular location is the cytoplasm. The enzyme catalyses 2-(N(omega)-L-arginino)succinate = fumarate + L-arginine. Its pathway is amino-acid biosynthesis; L-arginine biosynthesis; L-arginine from L-ornithine and carbamoyl phosphate: step 3/3. This is Argininosuccinate lyase 2 from Shouchella clausii (strain KSM-K16) (Alkalihalobacillus clausii).